A 136-amino-acid chain; its full sequence is Small ribosomal subunit protein uS9 (136 aa).

The disordered stretch occupies residues 111 to 136 (TRDPRMKERKKTGQPGARKRFQFSKR). Residues 117–136 (KERKKTGQPGARKRFQFSKR) are compositionally biased toward basic residues.

Belongs to the universal ribosomal protein uS9 family.

The polypeptide is Small ribosomal subunit protein uS9 (Methylacidiphilum infernorum (isolate V4) (Methylokorus infernorum (strain V4))).